The sequence spans 325 residues: MVRTPSKAKRDRVVVIGTGHVGSSYAFALMNQGVAKELVIIDIDQEKASGDVMDLNHGQAFAPSVTSIWHGNYEDCKEADVVCISAGANQKPGETRLDLLEKNVIIFKEVVDAVMASGFNGIFLVATNPVDLLTQATQVFSGLPKKRVIGSGTTLDTARLRFMLGEYFQISAKHVHAYVVGEHGDSALPLWSTATIGNVPLSQYLLRNRAYKKADLDDIFTNVRDAAYEIIHKKGATYYGIAMSLVRITKALLKNEHAVMTVSTFLNGEFGAKEVCIAVPAIVNRNGVREVLELKLNDIERQQFTESVQMLKGTYKTIMQTGHSF.

NAD(+) contacts are provided by residues V21, D42, K47, Y73, and G87–A88. Residues Q90, R96, and N128 to D131 each bind substrate. NAD(+) is bound by residues A126–N128 and S151. Position 156 to 159 (D156 to R159) interacts with substrate. Beta-D-fructose 1,6-bisphosphate is bound by residues R161 and H176. H183 functions as the Proton acceptor in the catalytic mechanism. Phosphotyrosine is present on Y228. Residue T237 coordinates substrate.

This sequence belongs to the LDH/MDH superfamily. LDH family. In terms of assembly, homotetramer.

The protein resides in the cytoplasm. The catalysed reaction is (S)-lactate + NAD(+) = pyruvate + NADH + H(+). Its pathway is fermentation; pyruvate fermentation to lactate; (S)-lactate from pyruvate: step 1/1. Allosterically activated by fructose 1,6-bisphosphate (FBP). In terms of biological role, catalyzes the conversion of lactate to pyruvate. The protein is L-lactate dehydrogenase of Shouchella clausii (strain KSM-K16) (Alkalihalobacillus clausii).